The sequence spans 606 residues: Glutamine--fructose-6-phosphate aminotransferase [isomerizing] (606 aa).

C2 acts as the Nucleophile; for GATase activity in catalysis. One can recognise a Glutamine amidotransferase type-2 domain in the interval 2–217 (CGIIGIVGKE…EGDYVALDHD (216 aa)). 2 SIS domains span residues 280–421 (VPGD…ARGT) and 454–596 (IAAD…VDQP). The active-site For Fru-6P isomerization activity is the K601.

As to quaternary structure, homodimer.

The protein localises to the cytoplasm. It carries out the reaction D-fructose 6-phosphate + L-glutamine = D-glucosamine 6-phosphate + L-glutamate. Catalyzes the first step in hexosamine metabolism, converting fructose-6P into glucosamine-6P using glutamine as a nitrogen source. In Caulobacter vibrioides (strain ATCC 19089 / CIP 103742 / CB 15) (Caulobacter crescentus), this protein is Glutamine--fructose-6-phosphate aminotransferase [isomerizing].